The primary structure comprises 930 residues: RNA-binding protein 10 (930 aa).

Basic and acidic residues-rich tracts occupy residues 1-14 (MEYE…DRTG) and 21-45 (RSQD…RSYP). A disordered region spans residues 1-127 (MEYERRGGRG…EEDEEEEEKA (127 aa)). Position 2 is an N-acetylserine (glutamate 2). 3 positions are modified to phosphoserine: arginine 30, serine 61, and serine 89. Over residues 59–70 (DSSEEQSAEDSY) the composition is skewed to acidic residues. Basic residues predominate over residues 80–89 (RRRRRRHRHS). A compositionally biased stretch (basic and acidic residues) spans 98–111 (RDGDYRDQDYRTEQ). Positions 112–125 (GEEEEEEEDEEEEE) are enriched in acidic residues. Residues 129 to 209 (NIVMLRMLPQ…QKVSMHYSDP (81 aa)) enclose the RRM 1 domain. The RanBP2-type zinc-finger motif lies at 212–242 (KINEDWLCNKCGVQNFKRREKCFKCGVPKSE). Residues 300 to 384 (DTIILRNLNP…KTINVEFAKG (85 aa)) form the RRM 2 domain. Lysine 383 bears the N6-acetyllysine mark. 4 disordered regions span residues 466–524 (PGIT…AANS), 537–569 (SELQ…VPDV), 620–685 (EQSA…DERR), and 700–753 (KGAL…EEKL). Polar residues predominate over residues 508 to 524 (YQQSAEASSSQGTAANS). Residues 541–557 (SPTHPSSALPPATSPTA) show a composition bias toward low complexity. 3 stretches are compositionally biased toward basic and acidic residues: residues 623–639 (ADGH…GKEK), 653–669 (KDME…KENF), and 700–709 (KGALAERQHT). Phosphoserine occurs at positions 718, 723, 733, 736, and 738. The segment covering 743–753 (ERGGPEREEKL) has biased composition (basic and acidic residues). The segment at 759 to 784 (LACLLCRRQFPSKEALIRHQQLSGLH) adopts a C2H2-type; atypical zinc-finger fold. A phosphoserine mark is found at serine 781 and serine 797. A compositionally biased stretch (basic and acidic residues) spans 815 to 826 (RDRAAERREKYG). The segment at 815-861 (RDRAAERREKYGIPEPPEPKRRKYGGISTASVDFEQPTRDGLGSDNI) is disordered. Phosphoserine is present on serine 845. The 47-residue stretch at 858 to 904 (SDNIGSRMLQAMGWKEGSGLGRKKQGIVTPIEAQTRVRGSGLGARGS) folds into the G-patch domain. Residue arginine 902 is modified to Omega-N-methylarginine.

In terms of assembly, associates with the spliceosome. Component of a large chromatin remodeling complex, at least composed of MYSM1, PCAF, RBM10 and KIF11/TRIP5.

The protein localises to the nucleus. In terms of biological role, binds to ssRNA containing the consensus sequence 5'-AGGUAA-3'. May be involved in post-transcriptional processing, most probably in mRNA splicing. Binds to RNA homopolymers, with a preference for poly(G) and poly(U) and little for poly(A). May bind to specific miRNA hairpins. The protein is RNA-binding protein 10 of Homo sapiens (Human).